A 265-amino-acid chain; its full sequence is Protein Pars_0096 (265 aa).

It belongs to the CinA family.

The protein is Protein Pars_0096 of Pyrobaculum arsenaticum (strain DSM 13514 / JCM 11321 / PZ6).